The chain runs to 220 residues: Protein Syd (220 aa).

This sequence belongs to the Syd family.

It localises to the cell inner membrane. Its function is as follows. Interacts with the SecY protein in vivo. May bind preferentially to an uncomplexed state of SecY, thus functioning either as a chelating agent for excess SecY in the cell or as a regulatory factor that negatively controls the translocase function. This chain is Protein Syd, found in Shewanella loihica (strain ATCC BAA-1088 / PV-4).